Consider the following 275-residue polypeptide: Beta-lactamase OXA-3 (275 aa).

An N-terminal signal peptide occupies residues 1 to 21; that stretch reads MAIRIFAILFSTFVFGTFAHA. Catalysis depends on S72, which acts as the Acyl-ester intermediate. The residue at position 75 (K75) is an N6-carboxylysine. 210 to 212 contributes to the substrate binding site; the sequence is KTG.

It belongs to the class-D beta-lactamase family.

The catalysed reaction is a beta-lactam + H2O = a substituted beta-amino acid. This is an oxacillin-hydrolyzing beta-lactamase. This is Beta-lactamase OXA-3 (bla) from Pseudomonas aeruginosa.